The primary structure comprises 429 residues: Trehalose-phosphate phosphatase (429 aa).

The active-site Nucleophile is the Asp-181. Positions 181, 183, and 368 each coordinate Mg(2+). Residue Asp-181–Asp-183 participates in substrate binding.

It belongs to the trehalose phosphatase family. Requires Mg(2+) as cofactor.

It carries out the reaction alpha,alpha-trehalose 6-phosphate + H2O = alpha,alpha-trehalose + phosphate. Its pathway is glycan biosynthesis; trehalose biosynthesis. Its function is as follows. Removes the phosphate from trehalose 6-phosphate to produce free trehalose. This Mycobacterium leprae (strain TN) protein is Trehalose-phosphate phosphatase (otsB).